An 89-amino-acid chain; its full sequence is Small ribosomal subunit protein uS15 (89 aa).

This sequence belongs to the universal ribosomal protein uS15 family. Part of the 30S ribosomal subunit. Forms a bridge to the 50S subunit in the 70S ribosome, contacting the 23S rRNA.

One of the primary rRNA binding proteins, it binds directly to 16S rRNA where it helps nucleate assembly of the platform of the 30S subunit by binding and bridging several RNA helices of the 16S rRNA. In terms of biological role, forms an intersubunit bridge (bridge B4) with the 23S rRNA of the 50S subunit in the ribosome. The chain is Small ribosomal subunit protein uS15 from Colwellia psychrerythraea (strain 34H / ATCC BAA-681) (Vibrio psychroerythus).